The primary structure comprises 1178 residues: Dual specificity mitogen-activated protein kinase kinase hemipterous (1178 aa).

2 disordered regions span residues 74–103 (SGSG…SSSS) and 115–148 (ATGT…GGGL). Composition is skewed to low complexity over residues 91-103 (ATPF…SSSS) and 115-128 (ATGT…PPTT). In terms of domain architecture, Protein kinase spans 197 to 456 (LKHLGDLGNG…YPELLAQPFI (260 aa)). ATP contacts are provided by residues 203–211 (LGNGTSGNV) and K226. D320 acts as the Proton acceptor in catalysis. Residue S348 is modified to Phosphoserine. T352 is subject to Phosphothreonine. The tract at residues 522–648 (TYAGQSPTNP…DESPKKESMF (127 aa)) is disordered. The segment covering 523–543 (YAGQSPTNPQKTIKPTQIPSY) has biased composition (polar residues). Positions 544–570 (QQQQSQFFMQSATQLPQTTTTTPTATT) are enriched in low complexity. A compositionally biased stretch (gly residues) spans 574-593 (GGSGNGNGRGNGSGGSGNGS). Positions 594 to 608 (GSSSSASPLSPPSAG) are enriched in low complexity. A compositionally biased stretch (basic and acidic residues) spans 636–646 (KYNDESPKKES). Phosphoserine occurs at positions 646 and 662. 6 disordered regions span residues 715 to 783 (TTTP…LQPG), 797 to 851 (QNQL…STCS), 912 to 933 (GTSP…GNGN), 999 to 1026 (TSPV…VVNN), 1042 to 1108 (SSSS…NRGQ), and 1122 to 1178 (GQPP…TIDQ). A compositionally biased stretch (polar residues) spans 724–734 (TENSQAYDSCD). 3 stretches are compositionally biased toward low complexity: residues 735–783 (SSSN…LQPG), 808–817 (RYQQQRQQPP), and 837–851 (THST…STCS). Residues 912–928 (GTSPTLQSRSPEQQSDY) are compositionally biased toward polar residues. A compositionally biased stretch (low complexity) spans 1042-1055 (SSSSNTSQSTSPTT). Phosphoserine occurs at positions 1150 and 1154. Basic and acidic residues predominate over residues 1168 to 1178 (PQRRIYRTIDQ).

It belongs to the protein kinase superfamily. STE Ser/Thr protein kinase family. MAP kinase kinase subfamily. In terms of processing, MAPKK is itself dependent on Ser/Thr phosphorylation for activity catalyzed by MAP kinase kinase kinases. Weakly autophosphorylated.

The catalysed reaction is L-seryl-[protein] + ATP = O-phospho-L-seryl-[protein] + ADP + H(+). It carries out the reaction L-threonyl-[protein] + ATP = O-phospho-L-threonyl-[protein] + ADP + H(+). It catalyses the reaction L-tyrosyl-[protein] + ATP = O-phospho-L-tyrosyl-[protein] + ADP + H(+). Functionally, required for the epithelial cell sheet movement called dorsal closure (DC), which allows establishment of the dorsal epidermis. Controls the expression in the dorsal epithelium edges of another dorsal closure gene, puckered (puc). Phosphorylates and activates the MAP kinase bsk; bsk signal transduction pathway mediates an immune response and morphogenesis. This Drosophila melanogaster (Fruit fly) protein is Dual specificity mitogen-activated protein kinase kinase hemipterous (hep).